Reading from the N-terminus, the 205-residue chain is Protein phosphatase inhibitor 2 (205 aa).

Residues 1 to 44 (MAASTASHRPIKGILKNKTSTTSSVVASAEQPRRTVEEELSKKS) are disordered. Position 2 is an N-acetylalanine (A2). Residues 12–17 (KGILKN) form a required for binding PPP1CC region. Residues 19 to 29 (TSTTSSVVASA) show a composition bias toward low complexity. Basic and acidic residues predominate over residues 31-44 (QPRRTVEEELSKKS). The interval 43-55 (KSQKWDEMNILAT) is required for binding PPP1CC. At S44 the chain carries Phosphoserine; by ATM. At T73 the chain carries Phosphothreonine; by GSK3. Phosphoserine occurs at positions 87 and 89. A phosphothreonine mark is found at T96 and T116. Residues 104 to 142 (LAAAEGSEPKFRTREQESSGEEDNDLSPEEREKKRQFEM) are disordered. Basic and acidic residues predominate over residues 110–120 (SEPKFRTREQE). S121, S122, and S130 each carry phosphoserine. The segment covering 121 to 130 (SSGEEDNDLS) has biased composition (acidic residues). Residues 131-142 (PEEREKKRQFEM) are compositionally biased toward basic and acidic residues. The tract at residues 147–150 (HYNE) is required for binding PPP1CC catalytic center, displacing metal ions and inhibition of PPP1CC catalytic activity. Residues 163–205 (KDLHDDDEDEEMSETADADSMNIEESNQGSTAGDHLQHKSQSS) form a disordered region. The segment covering 167–179 (DDDEDEEMSETAD) has biased composition (acidic residues).

This sequence belongs to the protein phosphatase inhibitor 2 family. In terms of assembly, heterodimer with PP1. Phosphorylation on Ser-44 by ATM activates PP1 by dissociating the PP1-PPP1R2 complex. Phosphorylation on Thr-73 by GSK3 activates PP1 by dissociating the PP1-PPP1R2 complex. As to expression, central nervous system.

In terms of biological role, inhibitor of protein-phosphatase 1. The protein is Protein phosphatase inhibitor 2 (Ppp1r2) of Rattus norvegicus (Rat).